The sequence spans 361 residues: Aromatic amino acid aminotransferase (361 aa).

Residue K221 is modified to N6-(pyridoxal phosphate)lysine.

It belongs to the class-II pyridoxal-phosphate-dependent aminotransferase family. As to quaternary structure, homodimer. Pyridoxal 5'-phosphate is required as a cofactor.

It catalyses the reaction an aromatic L-alpha-amino acid + 2-oxoglutarate = an aromatic oxo-acid + L-glutamate. Aminotransferase that catalyzes the conversion of aromatic amino acids and 2-oxoglutarate into corresponding aromatic oxo acids and L-glutamate. The chain is Aromatic amino acid aminotransferase from Mycobacterium ulcerans (strain Agy99).